The sequence spans 131 residues: Profilin-10 (131 aa).

A disulfide bond links Cys13 and Cys115. The short motif at 81 to 97 (AVIRGKKGAGGITIKKT) is the Involved in PIP2 interaction element. Thr111 is subject to Phosphothreonine.

Belongs to the profilin family. In terms of assembly, occurs in many kinds of cells as a complex with monomeric actin in a 1:1 ratio. In terms of processing, phosphorylated by MAP kinases.

The protein resides in the cytoplasm. It localises to the cytoskeleton. In terms of biological role, binds to actin and affects the structure of the cytoskeleton. At high concentrations, profilin prevents the polymerization of actin, whereas it enhances it at low concentrations. The polypeptide is Profilin-10 (Phleum pratense (Common timothy)).